Consider the following 381-residue polypeptide: DNA dC-&gt;dU-editing enzyme APOBEC-3G (381 aa).

Positions 1 to 62 are essential for cytoplasmic localization; that stretch reads MKPQTRNTVV…ANIFQGQVSF (62 aa). CMP/dCMP-type deaminase domains lie at 29 to 143 and 211 to 325; these read HRNT…SQTG and GQHQ…LRRL. Threonine 32 is modified (phosphothreonine; by PKA). Histidine 67, cysteine 98, and cysteine 101 together coordinate Zn(2+). Residues 206-333 form a necessary for homooligomerization region; that stretch reads DPSVLGQHQS…RLDRAGTPIS (128 aa). The tract at residues 210-212 is interaction with DNA; sequence LGQ. Position 254 (histidine 254) interacts with Zn(2+). The active-site Proton donor is glutamate 256. Zn(2+)-binding residues include cysteine 285 and cysteine 288. The segment at 310–317 is interaction with DNA; sequence RIYDYQRG.

It belongs to the cytidine and deoxycytidylate deaminase family. Homodimer. Homooligomer. Can bind RNA to form ribonucleoprotein complexes of high-molecular-mass (HMM) or low-molecular-mass (LMM). HMM is inactive and heterogeneous in protein composition because of binding nonselectively to cellular RNAs, which in turn are associated with variety of cellular proteins. The LMM form which is enzymatically active has few or no RNAs associated. Its ability to form homooligomer is distinct from its ability to assemble into HMM. Interacts with APOBEC3B, APOBEC3F, MOV10, AGO2, EIF4E, EIF4ENIF1, DCP2 and DDX6 in an RNA-dependent manner. Interacts with AGO1, AGO3 and PKA/PRKACA. Requires Zn(2+) as cofactor.

The protein localises to the cytoplasm. The protein resides in the nucleus. Its subcellular location is the P-body. It carries out the reaction a 2'-deoxycytidine in single-stranded DNA + H2O + H(+) = a 2'-deoxyuridine in single-stranded DNA + NH4(+). Its function is as follows. DNA deaminase (cytidine deaminase) which acts as an inhibitor of retrovirus replication and retrotransposon mobility. After the penetration of retroviral nucleocapsids into target cells of infection and the initiation of reverse transcription, it can induce the conversion of cytosine to uracil in the minus-sense single-strand viral DNA, leading to G-to-A hypermutations in the subsequent plus-strand viral DNA. The resultant detrimental levels of mutations in the proviral genome, along with a deamination-independent mechanism that works prior to the proviral integration, together exert efficient antiretroviral effects in infected target cells. Selectively targets single-stranded DNA and does not deaminate double-stranded DNA or single- or double-stranded RNA. The sequence is that of DNA dC-&gt;dU-editing enzyme APOBEC-3G (APOBEC3G) from Lagothrix lagotricha (Brown woolly monkey).